The sequence spans 622 residues: 1-deoxy-D-xylulose-5-phosphate synthase (622 aa).

Residues His-74 and 115–117 (GHS) each bind thiamine diphosphate. Mg(2+) is bound at residue Asp-146. Residues 147-148 (GA), Asn-175, Tyr-286, and Glu-366 contribute to the thiamine diphosphate site. A Mg(2+)-binding site is contributed by Asn-175.

It belongs to the transketolase family. DXPS subfamily. Homodimer. The cofactor is Mg(2+). Requires thiamine diphosphate as cofactor.

The catalysed reaction is D-glyceraldehyde 3-phosphate + pyruvate + H(+) = 1-deoxy-D-xylulose 5-phosphate + CO2. The protein operates within metabolic intermediate biosynthesis; 1-deoxy-D-xylulose 5-phosphate biosynthesis; 1-deoxy-D-xylulose 5-phosphate from D-glyceraldehyde 3-phosphate and pyruvate: step 1/1. Functionally, catalyzes the acyloin condensation reaction between C atoms 2 and 3 of pyruvate and glyceraldehyde 3-phosphate to yield 1-deoxy-D-xylulose-5-phosphate (DXP). The chain is 1-deoxy-D-xylulose-5-phosphate synthase from Carboxydothermus hydrogenoformans (strain ATCC BAA-161 / DSM 6008 / Z-2901).